The primary structure comprises 874 residues: Alanine--tRNA ligase (874 aa).

The Zn(2+) site is built by histidine 562, histidine 566, cysteine 663, and histidine 667.

The protein belongs to the class-II aminoacyl-tRNA synthetase family. Zn(2+) serves as cofactor.

It localises to the cytoplasm. The catalysed reaction is tRNA(Ala) + L-alanine + ATP = L-alanyl-tRNA(Ala) + AMP + diphosphate. Catalyzes the attachment of alanine to tRNA(Ala) in a two-step reaction: alanine is first activated by ATP to form Ala-AMP and then transferred to the acceptor end of tRNA(Ala). Also edits incorrectly charged Ser-tRNA(Ala) and Gly-tRNA(Ala) via its editing domain. The chain is Alanine--tRNA ligase from Bordetella bronchiseptica (strain ATCC BAA-588 / NCTC 13252 / RB50) (Alcaligenes bronchisepticus).